The following is a 234-amino-acid chain: Glucosamine-6-phosphate deaminase (234 aa).

The active-site Proton acceptor; for enolization step is the Asp-62. Asn-128 functions as the For ring-opening step in the catalytic mechanism. His-130 functions as the Proton acceptor; for ring-opening step in the catalytic mechanism. Catalysis depends on Glu-135, which acts as the For ring-opening step.

It belongs to the glucosamine/galactosamine-6-phosphate isomerase family. NagB subfamily.

The enzyme catalyses alpha-D-glucosamine 6-phosphate + H2O = beta-D-fructose 6-phosphate + NH4(+). Its pathway is amino-sugar metabolism; N-acetylneuraminate degradation; D-fructose 6-phosphate from N-acetylneuraminate: step 5/5. In terms of biological role, catalyzes the reversible isomerization-deamination of glucosamine 6-phosphate (GlcN6P) to form fructose 6-phosphate (Fru6P) and ammonium ion. The polypeptide is Glucosamine-6-phosphate deaminase (Streptococcus equi subsp. equi (strain 4047)).